A 326-amino-acid chain; its full sequence is Structural protein ORF326a (326 aa).

The disordered stretch occupies residues 1–28 (MSTTFRGKKEEEEEEEEEKEEKEEELFN). Residues 11–26 (EEEEEEEEKEEKEEEL) are compositionally biased toward acidic residues.

It localises to the virion. The polypeptide is Structural protein ORF326a (Acidianus two-tailed virus (ATV)).